Consider the following 380-residue polypeptide: Acyl-coenzyme A diphosphatase SCS3 (380 aa).

Residues 1-7 (MSSKWFN) are Cytoplasmic-facing. A helical transmembrane segment spans residues 8 to 28 (AIHLLVCPLTVLVGYLMNAYG). Topologically, residues 29-43 (YGAALQATLNKDGLV) are lumenal. The chain crosses the membrane as a helical span at residues 44–64 (NAMLVKKGWFWTSLVGWWCII). The Cytoplasmic portion of the chain corresponds to 65–88 (RYRAVPGATGRDRRHIVQSFKRYA). The chain crosses the membrane as a helical span at residues 89–109 (ILTVWWYVFTQGIWFGVGPIM). The Lumenal portion of the chain corresponds to 110–233 (DLVFVYTGGH…GHWAGGHDPS (124 aa)). Residues 234–254 (GHVFLATLMCMFLLGELRVFG) form a helical membrane-spanning segment. Histidine 235 is a catalytic residue. Residues 255 to 325 (RRALAHLYAQ…LTRCIACDHP (71 aa)) are Cytoplasmic-facing. Residues 326–346 (VIILLTLLVTWLWQLLLTAVA) traverse the membrane as a helical segment. Over 347–356 (SRFHTVREHM) the chain is Lumenal. The active site involves histidine 350. Residues 357-377 (SGLLAAYIVTGLVYARDAAAL) traverse the membrane as a helical segment. Residues 378–380 (RPV) lie on the Cytoplasmic side of the membrane.

It belongs to the FIT family. Fungal FIT2B/SCS3 subfamily.

It localises to the endoplasmic reticulum membrane. The catalysed reaction is an acyl-CoA + H2O = an acyl-4'-phosphopantetheine + adenosine 3',5'-bisphosphate + 2 H(+). It carries out the reaction (9Z)-octadecenoyl-CoA + H2O = S-(9Z-octadecenoyl)-4'-phosphopantetheine + adenosine 3',5'-bisphosphate + 2 H(+). It catalyses the reaction (5Z,8Z,11Z,14Z)-eicosatetraenoyl-CoA + H2O = S-(5Z,8Z,11Z,14Z-eicosatetraenoyl)-4'-phosphopantetheine + adenosine 3',5'-bisphosphate + 2 H(+). The enzyme catalyses hexadecanoyl-CoA + H2O = S-hexadecanoyl-4'-phosphopantetheine + adenosine 3',5'-bisphosphate + 2 H(+). Functionally, fatty acyl-coenzyme A (CoA) diphosphatase that hydrolyzes fatty acyl-CoA to yield acyl-4'-phosphopantetheine and adenosine 3',5'-bisphosphate. Preferentially hydrolyzes unsaturated long-chain acyl-CoA substrates in the endoplasmic reticulum (ER) lumen. This catalytic activity is required for maintaining ER structure and for lipid droplets (LDs) biogenesis, which are lipid storage organelles involved in maintaining lipid and energy homeostasis. May directly bind to diacylglycerol (DAGs) and triacylglycerol, which is also important for LD biogenesis. May support directional budding of nacent LDs from the ER into the cytosol by reducing DAG levels at sites of LD formation. May play a role in the regulation of cell morphology and cytoskeletal organization. Involved in phospholipid biosynthesis. The polypeptide is Acyl-coenzyme A diphosphatase SCS3 (Saccharomyces cerevisiae (strain ATCC 204508 / S288c) (Baker's yeast)).